Reading from the N-terminus, the 242-residue chain is tRNA (guanine-N(7)-)-methyltransferase (242 aa).

S-adenosyl-L-methionine contacts are provided by E66, E91, D118, and D141. The active site involves D141. Substrate is bound by residues K145, D177, and T214–E217.

The protein belongs to the class I-like SAM-binding methyltransferase superfamily. TrmB family. In terms of assembly, monomer.

It catalyses the reaction guanosine(46) in tRNA + S-adenosyl-L-methionine = N(7)-methylguanosine(46) in tRNA + S-adenosyl-L-homocysteine. It participates in tRNA modification; N(7)-methylguanine-tRNA biosynthesis. Its function is as follows. Catalyzes the formation of N(7)-methylguanine at position 46 (m7G46) in tRNA. The protein is tRNA (guanine-N(7)-)-methyltransferase of Buchnera aphidicola subsp. Baizongia pistaciae (strain Bp).